A 637-amino-acid chain; its full sequence is Epithelial sodium channel subunit alpha (637 aa).

A disordered region spans residues 1 to 34 (MGTASRGGSVKAEKMPEGEKTRQCKQETEQQQKE). Over 1-76 (MGTASRGGSV…VCSKKNKMKT (76 aa)) the chain is Cytoplasmic. Over residues 11–34 (KAEKMPEGEKTRQCKQETEQQQKE) the composition is skewed to basic and acidic residues. The chain crosses the membrane as a helical span at residues 77–97 (AFWSVLFILTFGLMYWQFGIL). The Extracellular portion of the chain corresponds to 98–548 (YREYFSYPVN…NQWSLWFGSS (451 aa)). 10 disulfide bridges follow: C125–C292, C217–C224, C269–C276, C380–C465, C402–C442, C402–C461, C406–C457, C415–C442, C415–C465, and C417–C431. Residues 549–569 (VLSVMELAELILDFTVITFIL) traverse the membrane as a helical segment. At 570–637 (AFRWFRSKQW…PSKDGETGLE (68 aa)) the chain is on the cytoplasmic side.

This sequence belongs to the amiloride-sensitive sodium channel (TC 1.A.6) family. SCNN1A subfamily. In terms of assembly, heterotrimer; containing an alpha/SCNN1A, a beta/SCNN1B and a gamma/SCNN1G subunit. The long isoform has been found in cochlea, colon, and cartilage. The short isoform is only found in cochlea.

It is found in the apical cell membrane. The protein localises to the cell projection. The protein resides in the cilium. It localises to the cytoplasmic granule. Its subcellular location is the cytoplasm. It is found in the cytoplasmic vesicle. The protein localises to the secretory vesicle. The protein resides in the acrosome. It localises to the flagellum. It catalyses the reaction Na(+)(in) = Na(+)(out). With respect to regulation, originally identified and characterized by its inhibition by the diuretic drug amiloride. Functionally, this is one of the three pore-forming subunits of the heterotrimeric epithelial sodium channel (ENaC), a critical regulator of sodium balance and fluid homeostasis. ENaC operates in epithelial tissues, where it mediates the electrodiffusion of sodium ions from extracellular fluid through the apical membrane of cells, with water following osmotically. This is Epithelial sodium channel subunit alpha from Gallus gallus (Chicken).